The chain runs to 388 residues: MNLHEYQAKSLFAEYGLPVSEGFACDTAQEAVEAAGHIGGDMWVVKCQVHAGGRGKAGGVKVTSSKDEIRAFAENWLGKNLVTYQTDAKGQPVAKILVESCTDIANELYLGAVVDRSTRRVVFMASTEGGVDIETVAEHTPELIHTAIIDPLTGPQAYQARDLGFKLGLNPTQMKQFTKIFMGLANMFNDHDFALLEINPLVITTEGNLHCLDGKIGIDGNALFRQPKIKAMHDPSQDDAREAHAAKFELNYVALDGNVGCMVNGAGLAMGTMDIVNLHGGKPANFLDVGGGATKERVAEAFKIILSDSNVKAVLVNIFGGIVRCDMIAEGIIGAVKEVGVKVPVVVRLEGTNAELGREVLAKSGLDIIAATSLTDAAEQVVKAAEGK.

Positions 9-244 (KSLFAEYGLP…PSQDDAREAH (236 aa)) constitute an ATP-grasp domain. ATP-binding positions include Lys-46, 53-55 (GRG), Glu-99, Thr-102, and Glu-107. The Mg(2+) site is built by Asn-199 and Asp-213. Substrate-binding positions include Asn-264 and 321–323 (GIV).

This sequence belongs to the succinate/malate CoA ligase beta subunit family. In terms of assembly, heterotetramer of two alpha and two beta subunits. Mg(2+) serves as cofactor.

The enzyme catalyses succinate + ATP + CoA = succinyl-CoA + ADP + phosphate. It catalyses the reaction GTP + succinate + CoA = succinyl-CoA + GDP + phosphate. The protein operates within carbohydrate metabolism; tricarboxylic acid cycle; succinate from succinyl-CoA (ligase route): step 1/1. Succinyl-CoA synthetase functions in the citric acid cycle (TCA), coupling the hydrolysis of succinyl-CoA to the synthesis of either ATP or GTP and thus represents the only step of substrate-level phosphorylation in the TCA. The beta subunit provides nucleotide specificity of the enzyme and binds the substrate succinate, while the binding sites for coenzyme A and phosphate are found in the alpha subunit. This chain is Succinate--CoA ligase [ADP-forming] subunit beta, found in Shewanella denitrificans (strain OS217 / ATCC BAA-1090 / DSM 15013).